Here is a 437-residue protein sequence, read N- to C-terminus: Vitellogenin-1 (437 aa).

The first 19 residues, 1–19, serve as a signal peptide directing secretion; that stretch reads MNPLKIFCFLALVIAVASA. 2 disordered regions span residues 161–194 and 405–437; these read QQQP…ESWK and PKSP…QNQE. 2 stretches are compositionally biased toward polar residues: residues 174–184 and 427–437; these read GSSQGNQGATS and SWKSGKNQNQE.

This sequence belongs to the AB hydrolase superfamily. Lipase family. Synthesized in the fat body and ovarian follicle cells and accumulate in the oocyte.

It localises to the secreted. In terms of biological role, vitellogenin is the major yolk protein of eggs where it is used as a food source during embryogenesis. The sequence is that of Vitellogenin-1 (VG1-GAMMA) from Ceratitis capitata (Mediterranean fruit fly).